The primary structure comprises 1185 residues: ELMO domain-containing protein F (1185 aa).

Disordered stretches follow at residues 88–133 (QPSP…GNNN), 176–196 (ISTN…NTAE), 361–409 (NNNS…VENE), 566–628 (KSTD…NTKS), 642–805 (ETER…KSSG), 819–868 (LGEK…PYII), 883–989 (DLDF…TQVT), and 1044–1114 (QKQK…KPVL). Low complexity-rich tracts occupy residues 94 to 127 (STIH…SSPI), 176 to 194 (ISTN…NNNT), 361 to 406 (NNNS…NNNV), and 587 to 613 (PQSQ…SSSS). The 214-residue stretch at 275-488 (DRQNVLSFLN…KTRAVLSRIK (214 aa)) folds into the ELMO domain. The span at 648–665 (SLTGSNGITDGGDSNPNS) shows a compositional bias: polar residues. Residues 688 to 699 (SENGSSSSFSFE) show a composition bias toward low complexity. The span at 721–732 (FNSLTGELTMNI) shows a compositional bias: polar residues. 2 stretches are compositionally biased toward low complexity: residues 733-760 (SSSS…PNVS) and 767-780 (TTTT…TTTT). A compositionally biased stretch (polar residues) spans 781 to 790 (DDQSQQQVPP). The span at 829-841 (KVKSKKEKKKKSK) shows a compositional bias: basic residues. Composition is skewed to low complexity over residues 853 to 864 (NNSANNSSYNNS), 912 to 974 (SSSN…QQPQ), 1053 to 1072 (DENQ…SSNE), and 1096 to 1109 (GRNS…SSLS).

The polypeptide is ELMO domain-containing protein F (elmoF) (Dictyostelium discoideum (Social amoeba)).